The primary structure comprises 519 residues: Cytochrome P450 CYP99A1 (519 aa).

Residue C453 participates in heme binding.

Belongs to the cytochrome P450 family. Heme is required as a cofactor.

The protein localises to the membrane. This Sorghum bicolor (Sorghum) protein is Cytochrome P450 CYP99A1 (CYP99A1).